The sequence spans 504 residues: AMP phosphorylase (504 aa).

AMP-binding positions include G169, 195–200, and T204; that span reads SRAITS. The Proton donor role is filled by D257. AMP contacts are provided by S265 and K289.

This sequence belongs to the thymidine/pyrimidine-nucleoside phosphorylase family. Type 2 subfamily.

It catalyses the reaction AMP + phosphate = alpha-D-ribose 1,5-bisphosphate + adenine. The catalysed reaction is CMP + phosphate = cytosine + alpha-D-ribose 1,5-bisphosphate. It carries out the reaction UMP + phosphate = alpha-D-ribose 1,5-bisphosphate + uracil. Its function is as follows. Catalyzes the conversion of AMP and phosphate to adenine and ribose 1,5-bisphosphate (R15P). Exhibits phosphorylase activity toward CMP and UMP in addition to AMP. Functions in an archaeal AMP degradation pathway, together with R15P isomerase and RubisCO. The polypeptide is AMP phosphorylase (Methanococcus aeolicus (strain ATCC BAA-1280 / DSM 17508 / OCM 812 / Nankai-3)).